A 513-amino-acid chain; its full sequence is Na(+)/H(+) antiporter NhaB (513 aa).

The next 12 helical transmembrane spans lie at 21 to 41 (ICIIAFLVINPLIYFFISPFV), 64 to 84 (QPGGLLAIEAVFIGMTSAHHV), 88 to 108 (IMANFEVILLLMFMVAGIYFM), 119 to 139 (LLIVIHSKKILSLAFCLSATF), 143 to 163 (FLDALTVIAVIISVGTGFYGV), 202 to 222 (LLMHAAVGSALGGVMTMVGEP), 243 to 263 (LPVSLPVLICGVITCLLLEHF), 299 to 318 (MGIQALAGIWLVVGLALHLA), 322 to 344 (IIGLTIIIICTAFCGITDEHAIG), 350 to 370 (PMPFTALIVVFFTVVAVIVDL), 389 to 409 (LALFYVFNGLLSMISDNVFVG), and 477 to 497 (MALPYTIVLSIIGFLSLEFLL).

The protein belongs to the NhaB Na(+)/H(+) (TC 2.A.34) antiporter family.

The protein resides in the cell inner membrane. It catalyses the reaction 2 Na(+)(in) + 3 H(+)(out) = 2 Na(+)(out) + 3 H(+)(in). Its function is as follows. Na(+)/H(+) antiporter that extrudes sodium in exchange for external protons. The sequence is that of Na(+)/H(+) antiporter NhaB from Actinobacillus pleuropneumoniae serotype 3 (strain JL03).